We begin with the raw amino-acid sequence, 345 residues long: Myb/SANT-like DNA-binding domain-containing protein 4 (345 aa).

The Myb-like domain maps to 4-77 (LKRKRKSNFS…EVKRRYLDWR (74 aa)). A Glycyl lysine isopeptide (Lys-Gly) (interchain with G-Cter in SUMO2) cross-link involves residue lysine 9. Residue serine 106 is modified to Phosphoserine. Residues lysine 114 and lysine 142 each participate in a glycyl lysine isopeptide (Lys-Gly) (interchain with G-Cter in SUMO2) cross-link. The disordered stretch occupies residues 139–175 (TEVKVEEEERDPQSPEFEIEEEEEMLSSVIPDSRREN). Threonine 188 is modified (phosphothreonine). Positions 202 to 344 (HLLMNIEKQK…RLRIQKEGHL (143 aa)) form a coiled coil. Glycyl lysine isopeptide (Lys-Gly) (interchain with G-Cter in SUMO2) cross-links involve residues lysine 237, lysine 254, and lysine 273.

The chain is Myb/SANT-like DNA-binding domain-containing protein 4 (Msantd4) from Mus musculus (Mouse).